The chain runs to 385 residues: 1-deoxy-D-xylulose 5-phosphate reductoisomerase (385 aa).

Positions 10, 11, 12, 13, 37, and 124 each coordinate NADPH. K125 provides a ligand contact to 1-deoxy-D-xylulose 5-phosphate. E126 provides a ligand contact to NADPH. A Mn(2+)-binding site is contributed by D150. 1-deoxy-D-xylulose 5-phosphate is bound by residues S151, E152, S176, and H199. E152 lines the Mn(2+) pocket. NADPH is bound at residue G205. 1-deoxy-D-xylulose 5-phosphate-binding residues include S212, N217, K218, and E221. E221 contacts Mn(2+).

This sequence belongs to the DXR family. It depends on Mg(2+) as a cofactor. Requires Mn(2+) as cofactor.

It carries out the reaction 2-C-methyl-D-erythritol 4-phosphate + NADP(+) = 1-deoxy-D-xylulose 5-phosphate + NADPH + H(+). It participates in isoprenoid biosynthesis; isopentenyl diphosphate biosynthesis via DXP pathway; isopentenyl diphosphate from 1-deoxy-D-xylulose 5-phosphate: step 1/6. Functionally, catalyzes the NADPH-dependent rearrangement and reduction of 1-deoxy-D-xylulose-5-phosphate (DXP) to 2-C-methyl-D-erythritol 4-phosphate (MEP). The chain is 1-deoxy-D-xylulose 5-phosphate reductoisomerase from Clostridium botulinum (strain Kyoto / Type A2).